The sequence spans 407 residues: Phosphopentomutase (407 aa).

6 residues coordinate Mn(2+): D10, D307, H312, D348, H349, and H360.

Belongs to the phosphopentomutase family. Requires Mn(2+) as cofactor.

The protein localises to the cytoplasm. It carries out the reaction 2-deoxy-alpha-D-ribose 1-phosphate = 2-deoxy-D-ribose 5-phosphate. The catalysed reaction is alpha-D-ribose 1-phosphate = D-ribose 5-phosphate. The protein operates within carbohydrate degradation; 2-deoxy-D-ribose 1-phosphate degradation; D-glyceraldehyde 3-phosphate and acetaldehyde from 2-deoxy-alpha-D-ribose 1-phosphate: step 1/2. Functionally, isomerase that catalyzes the conversion of deoxy-ribose 1-phosphate (dRib-1-P) and ribose 1-phosphate (Rib-1-P) to deoxy-ribose 5-phosphate (dRib-5-P) and ribose 5-phosphate (Rib-5-P), respectively. This chain is Phosphopentomutase, found in Methylobacterium nodulans (strain LMG 21967 / CNCM I-2342 / ORS 2060).